The following is a 361-amino-acid chain: Single-stranded DNA-binding protein 2 (361 aa).

Lys6 is subject to N6-acetyllysine. The LisH domain maps to 18-50 (AREKLALYVYEYLLHVGAQKSAQTFLSEIRWEK). Disordered stretches follow at residues 147–171 (GGVP…HPNM) and 194–361 (GAMR…TMSV). The span at 204 to 219 (GGPGMPGMNMGPGGGR) shows a compositional bias: gly residues. The segment covering 225 to 236 (TNANSIPYSSAS) has biased composition (polar residues). A compositionally biased stretch (pro residues) spans 246–256 (GGGPPGTPIMP). The span at 289-299 (GSDGPMGGLGG) shows a compositional bias: gly residues. A compositionally biased stretch (polar residues) spans 317–332 (ISKNSPNNMSLSNQPG). Position 321 is a phosphoserine (Ser321). Phosphothreonine is present on Thr333. The segment covering 346–361 (NPFQSESYSPSMTMSV) has biased composition (polar residues).

As to expression, ubiquitous.

The protein resides in the nucleus. This chain is Single-stranded DNA-binding protein 2 (SSBP2), found in Homo sapiens (Human).